The chain runs to 184 residues: Protein DMP2 (184 aa).

The next 4 membrane-spanning stretches (helical) occupy residues 19-39 (LIKL…PVLT), 45-65 (LLIN…SCCF), 105-125 (VGDF…SLLD), and 142-162 (IFLM…FTVF).

Belongs to the plant DMP1 protein family. As to expression, expressed constitutively in leaves, stems, flowers, siliques and roots.

The protein localises to the endoplasmic reticulum membrane. The protein resides in the vacuole membrane. In terms of biological role, involved in membrane remodeling. In Arabidopsis thaliana (Mouse-ear cress), this protein is Protein DMP2.